A 263-amino-acid chain; its full sequence is Endonuclease 8 (263 aa).

Pro2 acts as the Schiff-base intermediate with DNA in catalysis. Glu3 (proton donor) is an active-site residue. Lys53 serves as the catalytic Proton donor; for beta-elimination activity. The DNA site is built by Gln70, Arg125, and Asn169. The FPG-type zinc-finger motif lies at 229–263 (KVFHRDGEPCERCGGIIEKTTLSSRPFYWCPGCQH). Residue Arg253 is the Proton donor; for delta-elimination activity of the active site.

This sequence belongs to the FPG family. Requires Zn(2+) as cofactor.

The enzyme catalyses 2'-deoxyribonucleotide-(2'-deoxyribose 5'-phosphate)-2'-deoxyribonucleotide-DNA = a 3'-end 2'-deoxyribonucleotide-(2,3-dehydro-2,3-deoxyribose 5'-phosphate)-DNA + a 5'-end 5'-phospho-2'-deoxyribonucleoside-DNA + H(+). Its function is as follows. Involved in base excision repair of DNA damaged by oxidation or by mutagenic agents. Acts as a DNA glycosylase that recognizes and removes damaged bases. Has a preference for oxidized pyrimidines, such as thymine glycol, 5,6-dihydrouracil and 5,6-dihydrothymine. Has AP (apurinic/apyrimidinic) lyase activity and introduces nicks in the DNA strand. Cleaves the DNA backbone by beta-delta elimination to generate a single-strand break at the site of the removed base with both 3'- and 5'-phosphates. The protein is Endonuclease 8 of Escherichia coli O127:H6 (strain E2348/69 / EPEC).